The sequence spans 122 residues: Large ribosomal subunit protein uL14 (122 aa).

The protein belongs to the universal ribosomal protein uL14 family. In terms of assembly, part of the 50S ribosomal subunit. Forms a cluster with proteins L3 and L19. In the 70S ribosome, L14 and L19 interact and together make contacts with the 16S rRNA in bridges B5 and B8.

Functionally, binds to 23S rRNA. Forms part of two intersubunit bridges in the 70S ribosome. The chain is Large ribosomal subunit protein uL14 from Carsonella ruddii (strain PV).